We begin with the raw amino-acid sequence, 372 residues long: Aminomethyltransferase (372 aa).

The protein belongs to the GcvT family. The glycine cleavage system is composed of four proteins: P, T, L and H.

It catalyses the reaction N(6)-[(R)-S(8)-aminomethyldihydrolipoyl]-L-lysyl-[protein] + (6S)-5,6,7,8-tetrahydrofolate = N(6)-[(R)-dihydrolipoyl]-L-lysyl-[protein] + (6R)-5,10-methylene-5,6,7,8-tetrahydrofolate + NH4(+). Functionally, the glycine cleavage system catalyzes the degradation of glycine. In Burkholderia multivorans (strain ATCC 17616 / 249), this protein is Aminomethyltransferase.